The primary structure comprises 252 residues: UPF0273 protein MK0039 (252 aa).

The 245-residue stretch at 4–248 folds into the KaiC domain; it reads ERVSTGIPGM…VFVKERGEVR (245 aa). 31 to 38 is an ATP binding site; sequence GGPGTGKT.

It belongs to the UPF0273 family.

The chain is UPF0273 protein MK0039 from Methanopyrus kandleri (strain AV19 / DSM 6324 / JCM 9639 / NBRC 100938).